Consider the following 181-residue polypeptide: Small ribosomal subunit protein uS4 (181 aa).

The 73-residue stretch at 108 to 180 folds into the S4 RNA-binding domain; the sequence is RRLQTIVYRK…GERQRIMNQR (73 aa).

It belongs to the universal ribosomal protein uS4 family. As to quaternary structure, part of the 30S ribosomal subunit. Contacts protein S5. The interaction surface between S4 and S5 is involved in control of translational fidelity.

In terms of biological role, one of the primary rRNA binding proteins, it binds directly to 16S rRNA where it nucleates assembly of the body of the 30S subunit. With S5 and S12 plays an important role in translational accuracy. The chain is Small ribosomal subunit protein uS4 from Methanocorpusculum labreanum (strain ATCC 43576 / DSM 4855 / Z).